A 370-amino-acid polypeptide reads, in one-letter code: NADH-quinone oxidoreductase subunit D (370 aa).

This sequence belongs to the complex I 49 kDa subunit family. NDH-1 is composed of 14 different subunits. Subunits NuoB, C, D, E, F, and G constitute the peripheral sector of the complex.

It is found in the cell membrane. It catalyses the reaction a quinone + NADH + 5 H(+)(in) = a quinol + NAD(+) + 4 H(+)(out). In terms of biological role, NDH-1 shuttles electrons from NADH, via FMN and iron-sulfur (Fe-S) centers, to quinones in the respiratory chain. The immediate electron acceptor for the enzyme in this species is believed to be a menaquinone. Couples the redox reaction to proton translocation (for every two electrons transferred, four hydrogen ions are translocated across the cytoplasmic membrane), and thus conserves the redox energy in a proton gradient. The chain is NADH-quinone oxidoreductase subunit D from Clostridium beijerinckii (strain ATCC 51743 / NCIMB 8052) (Clostridium acetobutylicum).